Here is a 442-residue protein sequence, read N- to C-terminus: Cell division protein FtsA (442 aa).

It belongs to the FtsA/MreB family. As to quaternary structure, self-interacts. Interacts with FtsZ.

Its subcellular location is the cell inner membrane. Its function is as follows. Cell division protein that is involved in the assembly of the Z ring. May serve as a membrane anchor for the Z ring. The polypeptide is Cell division protein FtsA (Rhizobium meliloti (strain 1021) (Ensifer meliloti)).